The primary structure comprises 102 residues: MTPTACATVSTMTSVGVRALRQRASELLRRVEAGETIEITDRGRPVALLSPLPQGGPYEQLLASGEIERATLDVVDLPEPLDLDAGVELPSVTLARLREHER.

Belongs to the phD/YefM antitoxin family.

In terms of biological role, antitoxin component of a type II toxin-antitoxin (TA) system. Neutralizes the effect of cognate toxin VapC46. The protein is Antitoxin VapB46 (vapB46) of Mycobacterium tuberculosis (strain CDC 1551 / Oshkosh).